The primary structure comprises 134 residues: ATP synthase epsilon chain (134 aa).

It belongs to the ATPase epsilon chain family. In terms of assembly, F-type ATPases have 2 components, CF(1) - the catalytic core - and CF(0) - the membrane proton channel. CF(1) has five subunits: alpha(3), beta(3), gamma(1), delta(1), epsilon(1). CF(0) has three main subunits: a, b and c.

It localises to the cell membrane. Functionally, produces ATP from ADP in the presence of a proton gradient across the membrane. The protein is ATP synthase epsilon chain of Anoxybacillus flavithermus (strain DSM 21510 / WK1).